A 522-amino-acid polypeptide reads, in one-letter code: Zinc finger protein C25B8.19c (522 aa).

5 disordered regions span residues 1–25 (MSSD…LPTT), 61–96 (DPQA…SNSN), 235–265 (QRQS…QEVT), 311–386 (QPSS…HTLS), and 413–462 (NSAQ…STSS). A compositionally biased stretch (low complexity) spans 84–96 (AGNTNTPTTSNSN). 2 stretches are compositionally biased toward polar residues: residues 311 to 321 (QPSSRDLQNHP) and 335 to 344 (ASNTLNHANG). The span at 345–362 (NQAENASESSTSQSNDSQ) shows a compositional bias: low complexity. Residues 413–427 (NSAQAHPMGQQSDSN) show a composition bias toward polar residues. Positions 428–438 (YSDHHNNDKRA) are enriched in basic and acidic residues. Positions 453-462 (SHTGSSSTSS) are enriched in low complexity. 2 consecutive C2H2-type zinc fingers follow at residues 468-495 (YRCT…GERP) and 496-522 (FVCD…IHGL).

Its subcellular location is the nucleus. This Schizosaccharomyces pombe (strain 972 / ATCC 24843) (Fission yeast) protein is Zinc finger protein C25B8.19c.